A 1341-amino-acid polypeptide reads, in one-letter code: Pleckstrin homology domain-containing family G member 3 (1341 aa).

The segment at 1–68 is disordered; sequence MPVSTALHQD…PNSNNNSSGW (68 aa). Residues 18–29 show a composition bias toward low complexity; the sequence is SLVSTTSSSGSS. Polar residues-rich tracts occupy residues 42-51 and 59-68; these read SEASAQNGTG and PNSNNNSSGW. Serine 76 bears the Phosphoserine mark. The DH domain maps to 93 to 272; sequence YLGRVVREIV…TCVAWYINDM (180 aa). Residues 296–394 form the PH domain; the sequence is DLTTYGELVL…WTHHIKRLIL (99 aa). 2 positions are modified to phosphoserine: serine 433 and serine 502. The disordered stretch occupies residues 433-482; it reads SQDEVSSHVRQGRRQSEPGHTLFSRATLPSRQQGFEMPGLKGRRKSEPTR. 2 disordered regions span residues 508–657 and 684–715; these read DFGQ…EFPE and PEGS…LLPP. 2 stretches are compositionally biased toward acidic residues: residues 529-541 and 570-580; these read ELEE…EEEE and GSEEEEEEEES. Serine 571, serine 694, serine 695, serine 737, serine 759, serine 762, and serine 766 each carry phosphoserine. The span at 695–707 shows a compositional bias: acidic residues; it reads SEEEEEEEMEAAQ. Residues 775–832 are disordered; that stretch reads SIGDSLSNPPTPEVIIGADMVTDNGPSVNGTESPSAGSGCPTEQDRSSCKKKESALST. Over residues 798-810 the composition is skewed to polar residues; sequence NGPSVNGTESPSA. The segment covering 817 to 832 has biased composition (basic and acidic residues); that stretch reads EQDRSSCKKKESALST. Serine 862, serine 899, serine 900, and serine 947 each carry phosphoserine. Disordered stretches follow at residues 876-930, 939-958, 1071-1097, and 1117-1162; these read SRFN…EFCP, ERME…SQAN, KVTP…SGGK, and HGTS…PFDT. Over residues 939-948 the composition is skewed to basic and acidic residues; the sequence is ERMESSERSP. A compositionally biased stretch (polar residues) spans 949–958; the sequence is RTGSGQSQAN. Phosphoserine is present on residues serine 1129, serine 1134, serine 1136, serine 1141, serine 1155, serine 1158, and serine 1201. Positions 1135–1162 are enriched in polar residues; it reads FSPSAVSPRTTSPGARSSARSPLSPFDT. Disordered regions lie at residues 1204-1249 and 1271-1341; these read ENIV…LNGG and KGPH…NSVG. A compositionally biased stretch (basic and acidic residues) spans 1309 to 1320; the sequence is QPKEHGPRDSAD.

It localises to the cytoplasm. It is found in the cytoskeleton. In terms of biological role, plays a role in controlling cell polarity and cell motility by selectively binding newly polymerized actin and activating RAC1 and CDC42 to enhance local actin polymerization. This chain is Pleckstrin homology domain-containing family G member 3, found in Mus musculus (Mouse).